The chain runs to 76 residues: Probable 26S proteasome complex subunit dss-1 (76 aa).

2 disordered regions span residues methionine 1–phenylalanine 28 and aspartate 52–alanine 76. Composition is skewed to basic and acidic residues over residues threonine 7–threonine 20 and glutamate 57–lysine 70.

The protein belongs to the DSS1/SEM1 family. As to quaternary structure, part of the 26S proteasome.

The protein localises to the nucleus. It localises to the cytoplasm. Functionally, subunit of the 26S proteasome which plays a role in ubiquitin-dependent proteolysis. Has an essential role in oogenesis and larval growth. Required for intestinal function and default lifespan. The protein is Probable 26S proteasome complex subunit dss-1 of Caenorhabditis briggsae.